An 822-amino-acid chain; its full sequence is Cation/H(+) antiporter 3 (822 aa).

Helical transmembrane passes span 55–75 (FPHLQMIFLIISFLWQFLHFF), 116–136 (EIVFSLTAACSYMMFWFLMGV), 150–170 (AITIGLSSVLLSTLVCSVIFF), 190–210 (YVVIYSIQCLSSFPVVGNLLF), 224–244 (ISSAVISDFSTSILASVLIFM), 274–294 (IVVLFVCIAIYVFRPLMFYII), 305–325 (AIYLSTIIVMVSGSAILANWC), 331–351 (MGPFILGLAVPHGPPLGSAII), 362–382 (FLPFFIASSSTEIDISALFGW), 388–408 (IILIMVTSFVVKFIFTTVPAL), 418–438 (FALSLIMSFKGIFELGAYALA), and 447–467 (ETFTVACLYITLNSAIIPPIL).

This sequence belongs to the monovalent cation:proton antiporter 2 (CPA2) transporter (TC 2.A.37) family. CHX (TC 2.A.37.4) subfamily.

The protein localises to the membrane. May operate as a cation/H(+) antiporter. In Arabidopsis thaliana (Mouse-ear cress), this protein is Cation/H(+) antiporter 3 (CHX3).